A 55-amino-acid polypeptide reads, in one-letter code: uncharacterized protein (55 aa).

A helical transmembrane segment spans residues 7-24; that stretch reads VALVGAVLATLTACTGHI.

Its subcellular location is the membrane. This is an uncharacterized protein from Escherichia coli O157:H7.